A 188-amino-acid chain; its full sequence is Phosphoribosylglycinamide formyltransferase (188 aa).

12 to 14 (GSN) serves as a coordination point for N(1)-(5-phospho-beta-D-ribosyl)glycinamide. Residues Lys66, 91-94 (MRLI), and Asn108 contribute to the (6R)-10-formyltetrahydrofolate site. His110 (proton donor) is an active-site residue.

It belongs to the GART family.

The enzyme catalyses N(1)-(5-phospho-beta-D-ribosyl)glycinamide + (6R)-10-formyltetrahydrofolate = N(2)-formyl-N(1)-(5-phospho-beta-D-ribosyl)glycinamide + (6S)-5,6,7,8-tetrahydrofolate + H(+). The protein operates within purine metabolism; IMP biosynthesis via de novo pathway; N(2)-formyl-N(1)-(5-phospho-D-ribosyl)glycinamide from N(1)-(5-phospho-D-ribosyl)glycinamide (10-formyl THF route): step 1/1. Catalyzes the transfer of a formyl group from 10-formyltetrahydrofolate to 5-phospho-ribosyl-glycinamide (GAR), producing 5-phospho-ribosyl-N-formylglycinamide (FGAR) and tetrahydrofolate. This chain is Phosphoribosylglycinamide formyltransferase, found in Staphylococcus aureus (strain COL).